Consider the following 362-residue polypeptide: 3-dehydroquinate synthase (362 aa).

Residues D71–K76, G105–D109, T129–T130, K142, K151, and C169–T172 contribute to the NAD(+) site. 3 residues coordinate Zn(2+): E184, H247, and H264.

Belongs to the sugar phosphate cyclases superfamily. Dehydroquinate synthase family. Co(2+) is required as a cofactor. Zn(2+) serves as cofactor. It depends on NAD(+) as a cofactor.

It localises to the cytoplasm. The enzyme catalyses 7-phospho-2-dehydro-3-deoxy-D-arabino-heptonate = 3-dehydroquinate + phosphate. The protein operates within metabolic intermediate biosynthesis; chorismate biosynthesis; chorismate from D-erythrose 4-phosphate and phosphoenolpyruvate: step 2/7. In terms of biological role, catalyzes the conversion of 3-deoxy-D-arabino-heptulosonate 7-phosphate (DAHP) to dehydroquinate (DHQ). This is 3-dehydroquinate synthase from Vibrio atlanticus (strain LGP32) (Vibrio splendidus (strain Mel32)).